Reading from the N-terminus, the 785-residue chain is Tripartite terminase subunit 1 (785 aa).

The segment at 197 to 225 (CAVCFEELCVTANQGATIARRLADRICNH) adopts a C3H1-type zinc-finger fold. The interval 433 to 489 (GGAADAPKGGAGPDDDGDRVAVEEGTRGLGAPGGGGEDEDRRRGPGGQGPETWGDIA) is disordered. ATP is bound at residue 696 to 703 (FASVYRCG).

Belongs to the herpesviridae TRM1 protein family. In terms of assembly, associates with TRM2 and TRM3 to form the tripartite terminase complex. Interacts with portal protein.

It is found in the host nucleus. Component of the molecular motor that translocates viral genomic DNA in empty capsid during DNA packaging. Forms a tripartite terminase complex together with TRM2 and TRM3 in the host cytoplasm. Once the complex reaches the host nucleus, it interacts with the capsid portal vertex. This portal forms a ring in which genomic DNA is translocated into the capsid. TRM1 carries an endonuclease activity that plays an important role for the cleavage of concatemeric viral DNA into unit length genomes. This Human herpesvirus 1 (strain Angelotti) (HHV-1) protein is Tripartite terminase subunit 1.